A 1122-amino-acid chain; its full sequence is Phytochrome A (1122 aa).

The segment covering 1–11 (MSGSRPTQSSE) has biased composition (polar residues). Positions 1–21 (MSGSRPTQSSEGSRRSRHSAR) are disordered. The 185-residue stretch at 218–402 (SMERLCDTMV…VFAIHVNKEV (185 aa)) folds into the GAF domain. C323 is a phytochromobilin binding site. Positions 618–688 (VTSEMVRLIE…RMLENALEGT (71 aa)) constitute a PAS 1 domain. One can recognise a PAC domain in the interval 695–747 (FEIKTHLSRADAGPISLVVNACASRDLHENVVGVCFVAHDLTGQKTVMDKFTR). One can recognise a PAS 2 domain in the interval 748–822 (IEGDYKAIIQ…KNQEAFVNLG (75 aa)). Residues 902-1119 (YIKRQIRNPL…SFIITAELAA (218 aa)) enclose the Histidine kinase domain.

Belongs to the phytochrome family. In terms of assembly, homodimer. Interacts with NDPK2 and PKS4. Stabilized by interactions with PAPP5 and FYPP3 which are enhanced in the phosphorylated Pfr form. Interacts with COP1/SPA1 complex. Binds, via its photosensory domain, to PTAC12/HMR when photoactivated; this interaction stimulates its localization to photobodies. Interacts with FHY1, FHL and FHY3, especially upon far-red (FR) light illumination; when underphosphorylated. Forms PHYA/FHY1/HFR1 complex. Binds to PIF3/PAP3. In terms of processing, phosphorylated. Post-translationally, contains one covalently linked phytochromobilin chromophore. As to expression, expressed in fruits, flowers, leaves, stems, seedlings and roots.

The protein localises to the cytoplasm. The protein resides in the nucleus. It localises to the nucleoplasm. Its subcellular location is the nucleus speckle. In terms of biological role, regulatory photoreceptor which exists in two forms that are reversibly interconvertible by light: the Pr form that absorbs maximally in the red region of the spectrum and the Pfr form that absorbs maximally in the far-red region. Photoconversion of Pr to Pfr induces an array of morphogenetic responses, whereas reconversion of Pfr to Pr cancels the induction of those responses. Pfr controls the expression of a number of nuclear genes including those encoding the small subunit of ribulose-bisphosphate carboxylase, chlorophyll A/B binding protein, protochlorophyllide reductase, rRNA, etc. It also controls the expression of its own gene(s) in a negative feedback fashion. Involved in the flowering time regulation. Can phosphorylate FHY1 and, possibly, FHL, in red light conditions; this inactivates their co-shuttling to the nucleus. Regulates phototropic responses both in the nucleus (e.g. hypocotyl elongation and cotyledon opening under high-irradiance conditions and seed germination under very-low-fluence conditions) and in the cytoplasm (e.g. negative gravitropism in blue light and red-enhanced phototropism). Promotes seed germination, suppression of hypocotyl elongation, and randomization of hypocotyl growth orientation in far-red light; these responses to far-red light are repressed by UNE10/PIF8. Stabilizes UNE10/PIF8 but sequesters PIF3/PAP3 from its target genes promoters in far-red light. The protein is Phytochrome A of Arabidopsis thaliana (Mouse-ear cress).